A 155-amino-acid chain; its full sequence is MFEVRRLQINYKTLEEFQKFREFGLEELSMKEDLEANIVENDSESPFYGIYDNDLLVARMSLYKIDGKYDRYFQPAQDYYELWKLEVLPDYRSKDYGTALVNHAKSFGAPIKTNSRCRADDFWLKMGFTPVKYNLMRDRGENPYVWLPESVELQD.

The 148-residue stretch at 7–154 (LQINYKTLEE…VWLPESVELQ (148 aa)) folds into the N-acetyltransferase domain.

This is an uncharacterized protein from Brevibacillus brevis (strain 47 / JCM 6285 / NBRC 100599).